The primary structure comprises 239 residues: Pyridoxine 5'-phosphate synthase (239 aa).

Asparagine 7 provides a ligand contact to 3-amino-2-oxopropyl phosphate. 9–10 (DH) lines the 1-deoxy-D-xylulose 5-phosphate pocket. 3-amino-2-oxopropyl phosphate is bound at residue arginine 18. Residue histidine 43 is the Proton acceptor of the active site. The 1-deoxy-D-xylulose 5-phosphate site is built by arginine 45 and histidine 50. The active-site Proton acceptor is glutamate 70. Threonine 100 is a 1-deoxy-D-xylulose 5-phosphate binding site. The active-site Proton donor is the histidine 191. Residues glycine 192 and 213–214 (GH) each bind 3-amino-2-oxopropyl phosphate.

Belongs to the PNP synthase family. In terms of assembly, homooctamer; tetramer of dimers.

The protein resides in the cytoplasm. It carries out the reaction 3-amino-2-oxopropyl phosphate + 1-deoxy-D-xylulose 5-phosphate = pyridoxine 5'-phosphate + phosphate + 2 H2O + H(+). The protein operates within cofactor biosynthesis; pyridoxine 5'-phosphate biosynthesis; pyridoxine 5'-phosphate from D-erythrose 4-phosphate: step 5/5. Catalyzes the complicated ring closure reaction between the two acyclic compounds 1-deoxy-D-xylulose-5-phosphate (DXP) and 3-amino-2-oxopropyl phosphate (1-amino-acetone-3-phosphate or AAP) to form pyridoxine 5'-phosphate (PNP) and inorganic phosphate. This chain is Pyridoxine 5'-phosphate synthase, found in Geobacter metallireducens (strain ATCC 53774 / DSM 7210 / GS-15).